Reading from the N-terminus, the 356-residue chain is Xylose/arabinose import permease protein XylH (356 aa).

The next 10 helical transmembrane spans lie at 14–34, 41–61, 70–90, 96–116, 126–146, 161–181, 211–231, 242–262, 266–286, and 287–307; these read LFLV…AYFS, IFQY…LMLC, ALAN…YQAI, IVVS…MNGL, LITT…YSGG, VSIL…LILL, VKII…IIQG, FTAD…TSLV, GSLV…NGFN, and ILGI…VVVM.

This sequence belongs to the binding-protein-dependent transport system permease family. The complex is composed of two ATP-binding proteins (XylG), two transmembrane proteins (XylH) and a solute-binding protein (XylF).

The protein localises to the cell membrane. Its function is as follows. Part of the ABC transporter complex XylFGH involved in the uptake of xylose and arabinose. Responsible for the translocation of the substrate across the membrane. In Sulfolobus acidocaldarius (strain ATCC 33909 / DSM 639 / JCM 8929 / NBRC 15157 / NCIMB 11770), this protein is Xylose/arabinose import permease protein XylH.